Consider the following 408-residue polypeptide: Aurora kinase A-B (408 aa).

Over residues 1-10 (MERAVKENHK) the composition is skewed to basic and acidic residues. Positions 1–128 (MERAVKENHK…QGKTLAVPKE (128 aa)) are disordered. Over residues 85–110 (GHQTSKPQGPNENRNPQQTSHSSTPN) the composition is skewed to polar residues. One can recognise a Protein kinase domain in the interval 140–390 (FEIGRPLGKG…LKGVLEHPWI (251 aa)). Residues Lys-150, Lys-169, and 217–220 (LDYA) contribute to the ATP site. Asp-263 acts as the Proton acceptor in catalysis. Asp-281 is an ATP binding site. The activation segment stretch occupies residues 287-300 (HAPSSRRTTLCGTL).

This sequence belongs to the protein kinase superfamily. Ser/Thr protein kinase family. Aurora subfamily. In terms of assembly, interacts with kif2c and kif11. Phosphorylated. Autophosphorylated on a serine residue.

The protein localises to the cytoplasm. The protein resides in the cytoskeleton. Its subcellular location is the spindle pole. It localises to the microtubule organizing center. It is found in the centrosome. It catalyses the reaction L-seryl-[protein] + ATP = O-phospho-L-seryl-[protein] + ADP + H(+). The enzyme catalyses L-threonyl-[protein] + ATP = O-phospho-L-threonyl-[protein] + ADP + H(+). Mitotic serine/threonine kinases that contributes to the regulation of cell cycle progression. Associates with the centrosome and the spindle microtubules during mitosis and plays a critical role in various mitotic events including the establishment of mitotic spindle, centrosome duplication, centrosome separation as well as maturation, chromosomal alignment, spindle assembly checkpoint, and cytokinesis. Phosphorylates numerous target proteins. Important for microtubule formation and/or stabilization. This is Aurora kinase A-B (aurka-b) from Xenopus laevis (African clawed frog).